The chain runs to 529 residues: Peptide chain release factor 3 (529 aa).

One can recognise a tr-type G domain in the interval 11–280 (SKRRTFAIIS…GLTDWAPAPL (270 aa)). GTP-binding positions include 20–27 (SHPDAGKT), 88–92 (DTPGH), and 142–145 (NKLD).

This sequence belongs to the TRAFAC class translation factor GTPase superfamily. Classic translation factor GTPase family. PrfC subfamily.

It is found in the cytoplasm. Its function is as follows. Increases the formation of ribosomal termination complexes and stimulates activities of RF-1 and RF-2. It binds guanine nucleotides and has strong preference for UGA stop codons. It may interact directly with the ribosome. The stimulation of RF-1 and RF-2 is significantly reduced by GTP and GDP, but not by GMP. The sequence is that of Peptide chain release factor 3 from Vibrio vulnificus (strain YJ016).